Here is a 110-residue protein sequence, read N- to C-terminus: Toxin HigB-2 (110 aa).

Its function is as follows. Toxic component of a type II toxin-antitoxin (TA) system. Inhibits translation by cleavage of mRNA. The chain is Toxin HigB-2 (higB-2) from Vibrio cholerae serotype O1 (strain ATCC 39315 / El Tor Inaba N16961).